A 116-amino-acid chain; its full sequence is Ribosome-binding factor A (116 aa).

This sequence belongs to the RbfA family. Monomer. Binds 30S ribosomal subunits, but not 50S ribosomal subunits or 70S ribosomes.

The protein localises to the cytoplasm. Functionally, one of several proteins that assist in the late maturation steps of the functional core of the 30S ribosomal subunit. Associates with free 30S ribosomal subunits (but not with 30S subunits that are part of 70S ribosomes or polysomes). Required for efficient processing of 16S rRNA. May interact with the 5'-terminal helix region of 16S rRNA. This is Ribosome-binding factor A from Staphylococcus epidermidis (strain ATCC 35984 / DSM 28319 / BCRC 17069 / CCUG 31568 / BM 3577 / RP62A).